A 300-amino-acid chain; its full sequence is Porphobilinogen deaminase (300 aa).

The residue at position 239 (Cys239) is an S-(dipyrrolylmethanemethyl)cysteine.

Belongs to the HMBS family. As to quaternary structure, monomer. It depends on dipyrromethane as a cofactor.

It carries out the reaction 4 porphobilinogen + H2O = hydroxymethylbilane + 4 NH4(+). Its pathway is porphyrin-containing compound metabolism; protoporphyrin-IX biosynthesis; coproporphyrinogen-III from 5-aminolevulinate: step 2/4. Functionally, tetrapolymerization of the monopyrrole PBG into the hydroxymethylbilane pre-uroporphyrinogen in several discrete steps. This Francisella philomiragia subsp. philomiragia (strain ATCC 25017 / CCUG 19701 / FSC 153 / O#319-036) protein is Porphobilinogen deaminase.